Consider the following 190-residue polypeptide: Elongation factor P (190 aa).

Position 34 is an N6-(3,6-diaminohexanoyl)-5-hydroxylysine (Lys-34).

The protein belongs to the elongation factor P family. In terms of processing, may be beta-lysylated on the epsilon-amino group of Lys-34 by the combined action of EpmA and EpmB, and then hydroxylated on the C5 position of the same residue by EpmC (if this protein is present). Lysylation is critical for the stimulatory effect of EF-P on peptide-bond formation. The lysylation moiety may extend toward the peptidyltransferase center and stabilize the terminal 3-CCA end of the tRNA. Hydroxylation of the C5 position on Lys-34 may allow additional potential stabilizing hydrogen-bond interactions with the P-tRNA.

The protein localises to the cytoplasm. It functions in the pathway protein biosynthesis; polypeptide chain elongation. In terms of biological role, involved in peptide bond synthesis. Alleviates ribosome stalling that occurs when 3 or more consecutive Pro residues or the sequence PPG is present in a protein, possibly by augmenting the peptidyl transferase activity of the ribosome. Modification of Lys-34 is required for alleviation. This chain is Elongation factor P, found in Psychrobacter arcticus (strain DSM 17307 / VKM B-2377 / 273-4).